The chain runs to 188 residues: Elongation factor P (188 aa).

The residue at position 34 (Lys34) is an N6-(3,6-diaminohexanoyl)-5-hydroxylysine.

The protein belongs to the elongation factor P family. Post-translationally, may be beta-lysylated on the epsilon-amino group of Lys-34 by the combined action of EpmA and EpmB, and then hydroxylated on the C5 position of the same residue by EpmC (if this protein is present). Lysylation is critical for the stimulatory effect of EF-P on peptide-bond formation. The lysylation moiety may extend toward the peptidyltransferase center and stabilize the terminal 3-CCA end of the tRNA. Hydroxylation of the C5 position on Lys-34 may allow additional potential stabilizing hydrogen-bond interactions with the P-tRNA.

It localises to the cytoplasm. It functions in the pathway protein biosynthesis; polypeptide chain elongation. In terms of biological role, involved in peptide bond synthesis. Alleviates ribosome stalling that occurs when 3 or more consecutive Pro residues or the sequence PPG is present in a protein, possibly by augmenting the peptidyl transferase activity of the ribosome. Modification of Lys-34 is required for alleviation. This Klebsiella pneumoniae (strain 342) protein is Elongation factor P.